The primary structure comprises 335 residues: MAIISSVNRTCASESLLELYRSYKYILSTSFNIIIPIISLFFLVYAIKQLCAQSIIQYSTRVLLITTILFAVCHQIAYFCFKADLLYTMLFKLDQPCNLQHSSYDCRFITIATTTSNCGMALVQLAMSIDRVFALKFNRVYYKLKSIPGITLALITLSISFSMFFILTIDDPLSGYVNHCGFYPTYSQDKFHIFLDVTLYLAVFNFVFDIGLMYYSYQEILWKRSYSFVNRFQSRISLKCTQAIFIISICQCISNVLYSGLLSLLMKLGRYMSSADYNLSLSLAYTTPYSCLILPILICKVLEYIKKQRTVGILSLRNQKQSMEGHMAMINSAWK.

At 1–25 the chain is on the extracellular side; that stretch reads MAIISSVNRTCASESLLELYRSYKY. A helical transmembrane segment spans residues 26-46; the sequence is ILSTSFNIIIPIISLFFLVYA. Topologically, residues 47 to 61 are cytoplasmic; it reads IKQLCAQSIIQYSTR. Residues 62–82 form a helical membrane-spanning segment; sequence VLLITTILFAVCHQIAYFCFK. Topologically, residues 83–108 are extracellular; sequence ADLLYTMLFKLDQPCNLQHSSYDCRF. A helical membrane pass occupies residues 109 to 129; it reads ITIATTTSNCGMALVQLAMSI. The Cytoplasmic segment spans residues 130–146; that stretch reads DRVFALKFNRVYYKLKS. Residues 147–167 form a helical membrane-spanning segment; it reads IPGITLALITLSISFSMFFIL. The Extracellular segment spans residues 168-192; sequence TIDDPLSGYVNHCGFYPTYSQDKFH. The chain crosses the membrane as a helical span at residues 193–213; the sequence is IFLDVTLYLAVFNFVFDIGLM. Residues 214 to 243 lie on the Cytoplasmic side of the membrane; that stretch reads YYSYQEILWKRSYSFVNRFQSRISLKCTQA. A helical membrane pass occupies residues 244-264; that stretch reads IFIISICQCISNVLYSGLLSL. Residues 265–278 are Extracellular-facing; that stretch reads LMKLGRYMSSADYN. The chain crosses the membrane as a helical span at residues 279 to 299; it reads LSLSLAYTTPYSCLILPILIC. Residues 300–335 lie on the Cytoplasmic side of the membrane; the sequence is KVLEYIKKQRTVGILSLRNQKQSMEGHMAMINSAWK.

The protein belongs to the nematode receptor-like protein sra family. In terms of tissue distribution, expressed in the AWA and AWC chemosensory neurons.

It is found in the membrane. In terms of biological role, chemosensory receptor that negatively regulates RAS/MAPK signaling during vulva induction and the negative regulation of olfaction of volitile attractants. Required for the suppression of vulval induction in response to food starvation. Signaling acts through the GPA-5 G-alpha protein subunit. This Caenorhabditis elegans protein is Serpentine receptor class alpha-13 (sra-13).